The primary structure comprises 60 residues: UPF0434 protein YcaR (60 aa).

It belongs to the UPF0434 family.

The polypeptide is UPF0434 protein YcaR (Escherichia coli O139:H28 (strain E24377A / ETEC)).